We begin with the raw amino-acid sequence, 164 residues long: LWamide neuropeptides (164 aa).

Positions 1 to 6 (RSADAQ) are excised as a propeptide. The segment at 1 to 92 (RSADAQQHGL…WGRSADAQQP (92 aa)) is disordered. A tryptophan amide mark is found at Trp11 and Trp20. The propeptide occupies 23-27 (SADAQ). Residues Trp32 and Trp41 each carry the tryptophan amide modification. Positions 44 to 49 (SAEPGQ) are excised as a propeptide. Tryptophan amide is present on residues Trp53 and Trp62. The propeptide occupies 65–70 (SAEPLQ). Tryptophan amide is present on residues Trp74 and Trp83. Residues 86 to 90 (SADAQ) constitute a propeptide that is removed on maturation. Residues Trp95, Trp106, and Trp115 each carry the tryptophan amide modification. The propeptide occupies 118 to 123 (SADPGQ). Tryptophan amide occurs at positions 127 and 137. Residues 140–164 (SYEPPQFEDLEDLKKKSAIPKPSEQ) constitute a propeptide that is removed on maturation.

Belongs to the LWamide neuropeptide family.

The protein resides in the secreted. Functionally, metamorphosin A may be part of an internal signaling system involved in control of metamorphosis. This Actinia equina (Beadlet anemone) protein is LWamide neuropeptides.